The primary structure comprises 396 residues: S-adenosylmethionine synthase (396 aa).

Position 14 (His-14) interacts with ATP. Asp-16 contacts Mg(2+). Glu-42 contacts K(+). Residues Glu-55 and Gln-98 each contribute to the L-methionine site. Residues 98 to 108 form a flexible loop region; sequence QSPDIAQGVHG. Residues 167–169, 234–235, Asp-243, 249–250, Ser-266, and Lys-270 each bind ATP; these read DAK, RF, and RK. Asp-243 contributes to the L-methionine binding site. Residue Lys-274 participates in L-methionine binding.

It belongs to the AdoMet synthase family. Homotetramer; dimer of dimers. The cofactor is Mg(2+). K(+) serves as cofactor.

It localises to the cytoplasm. The enzyme catalyses L-methionine + ATP + H2O = S-adenosyl-L-methionine + phosphate + diphosphate. It functions in the pathway amino-acid biosynthesis; S-adenosyl-L-methionine biosynthesis; S-adenosyl-L-methionine from L-methionine: step 1/1. In terms of biological role, catalyzes the formation of S-adenosylmethionine (AdoMet) from methionine and ATP. The overall synthetic reaction is composed of two sequential steps, AdoMet formation and the subsequent tripolyphosphate hydrolysis which occurs prior to release of AdoMet from the enzyme. The protein is S-adenosylmethionine synthase of Treponema pallidum (strain Nichols).